The sequence spans 188 residues: Archaemetzincin (188 aa).

Residue His137 coordinates Zn(2+). The active-site Proton acceptor is Glu138. Zn(2+) contacts are provided by His141, His147, Cys148, Cys153, Cys172, and Cys175.

This sequence belongs to the peptidase M54 family. Monomer. Requires Zn(2+) as cofactor.

Its function is as follows. Probable zinc metalloprotease whose natural substrate is unknown. This chain is Archaemetzincin, found in Pyrococcus horikoshii (strain ATCC 700860 / DSM 12428 / JCM 9974 / NBRC 100139 / OT-3).